The following is a 61-amino-acid chain: Lens epithelial cell protein LEP503 (61 aa).

As to expression, restricted to lens epithelial cells.

Functionally, may play a role in lens epithelial cell differentiation. The sequence is that of Lens epithelial cell protein LEP503 (LENEP) from Homo sapiens (Human).